We begin with the raw amino-acid sequence, 187 residues long: UPF0301 protein Pcryo_0062 (187 aa).

Belongs to the UPF0301 (AlgH) family.

This Psychrobacter cryohalolentis (strain ATCC BAA-1226 / DSM 17306 / VKM B-2378 / K5) protein is UPF0301 protein Pcryo_0062.